Consider the following 136-residue polypeptide: ATP synthase epsilon chain (136 aa).

A disordered region spans residues 104-136 (AGMEGQPASPEKVKAQQQLNEARARMQASKSAD).

The protein belongs to the ATPase epsilon chain family. In terms of assembly, F-type ATPases have 2 components, CF(1) - the catalytic core - and CF(0) - the membrane proton channel. CF(1) has five subunits: alpha(3), beta(3), gamma(1), delta(1), epsilon(1). CF(0) has three main subunits: a, b and c.

The protein localises to the cellular thylakoid membrane. Produces ATP from ADP in the presence of a proton gradient across the membrane. This is ATP synthase epsilon chain from Synechococcus sp. (strain CC9902).